The sequence spans 479 residues: Anaerobic nitric oxide reductase flavorubredoxin (479 aa).

The interval 30–210 is zinc metallo-hydrolase; sequence LRGSSYNSYL…PFSRLVTPKI (181 aa). Positions 79, 81, 83, 147, 166, and 227 each coordinate Fe cation. The Flavodoxin-like domain occupies 254–393; it reads ITIFYDTMSN…LCREHGREIA (140 aa). Residues 260–264 and 342–369 each bind FMN; these read TMSNN and AFGS…EMSL. The Rubredoxin-like domain occupies 423 to 474; sequence GPRMQCSVCQWIYDPAKGEPMQDVAPGTPWSEVPDNFLCPECSLGKDVFEEL. Cysteine 428, cysteine 431, cysteine 461, and cysteine 464 together coordinate Fe cation.

This sequence in the N-terminal section; belongs to the zinc metallo-hydrolase group 3 family. Homotetramer. Fe cation serves as cofactor. Requires FMN as cofactor.

The protein localises to the cytoplasm. It functions in the pathway nitrogen metabolism; nitric oxide reduction. Functionally, anaerobic nitric oxide reductase; uses NADH to detoxify nitric oxide (NO), protecting several 4Fe-4S NO-sensitive enzymes. Has at least 2 reductase partners, only one of which (NorW, flavorubredoxin reductase) has been identified. NO probably binds to the di-iron center; electrons enter from the NorW at rubredoxin and are transferred sequentially to the FMN center and the di-iron center. Also able to function as an aerobic oxygen reductase. In Shigella dysenteriae serotype 1 (strain Sd197), this protein is Anaerobic nitric oxide reductase flavorubredoxin.